Here is a 308-residue protein sequence, read N- to C-terminus: MKPRIVYRPLHGILLLDKPSGLSSNNALQAARRLLRAEKGGHTGSLDPLATGLLPLCFGEATKIAGLLLGSAKAYDAEIVLGVTTDTDDADGESLRERAVPDLSEADLQAALAPFIGRIQQQAPIYSALKQGGEPLYAKARRGERIEAPVREVDVQAIEVLGYGAPRLRLRVTCGSGTYIRSLARDLGEALGCGAHIASLRRLWVEPFRAPQMITLEALSAVLEAGAEAQTLLLPIEAGLADFARIVLDQTRAARFRMGQRLRDAAFPTGQVAVFGPDGTPSGLGLVDADGRLSPQRLFNGLNEIPAC.

Aspartate 47 acts as the Nucleophile in catalysis.

Belongs to the pseudouridine synthase TruB family. Type 1 subfamily.

It catalyses the reaction uridine(55) in tRNA = pseudouridine(55) in tRNA. In terms of biological role, responsible for synthesis of pseudouridine from uracil-55 in the psi GC loop of transfer RNAs. This chain is tRNA pseudouridine synthase B, found in Xanthomonas axonopodis pv. citri (strain 306).